We begin with the raw amino-acid sequence, 343 residues long: Methionine import ATP-binding protein MetN (343 aa).

An ABC transporter domain is found at 2–241; it reads IKLSNITKVF…PKTPLAQKFI (240 aa). ATP is bound at residue 38–45; that stretch reads GASGAGKS.

This sequence belongs to the ABC transporter superfamily. Methionine importer (TC 3.A.1.24) family. In terms of assembly, the complex is composed of two ATP-binding proteins (MetN), two transmembrane proteins (MetI) and a solute-binding protein (MetQ).

It is found in the cell inner membrane. It catalyses the reaction L-methionine(out) + ATP + H2O = L-methionine(in) + ADP + phosphate + H(+). The catalysed reaction is D-methionine(out) + ATP + H2O = D-methionine(in) + ADP + phosphate + H(+). Part of the ABC transporter complex MetNIQ involved in methionine import. Responsible for energy coupling to the transport system. This Escherichia coli O157:H7 protein is Methionine import ATP-binding protein MetN.